Consider the following 242-residue polypeptide: Myogenic factor 6 (242 aa).

Residues 31–63 are disordered; that stretch reads SPLYPGSDGTLSPCQDQMPPEAGSDSSGEEHVL. The bHLH domain occupies 93-144; it reads DRRKAATLRERRRLKKINEAFEALKRRTVANPNQRLPKVEILRSAINYIERL.

Efficient DNA binding requires dimerization with another bHLH protein.

It localises to the nucleus. Its function is as follows. Involved in muscle differentiation (myogenic factor). Induces fibroblasts to differentiate into myoblasts. Probable sequence specific DNA-binding protein. The sequence is that of Myogenic factor 6 (MYF6) from Sus scrofa (Pig).